The sequence spans 391 residues: Phosphoprotein (391 aa).

Phosphothreonine occurs at positions 10, 16, and 39. Serine 69 is modified (phosphoserine). 2 disordered regions span residues 82–101 and 143–208; these read SSSE…FAQT and PRTS…PANV. 3 positions are modified to phosphothreonine: threonine 91, threonine 150, and threonine 165. Phosphoserine is present on serine 188. Positions 198–208 are enriched in polar residues; sequence LPQQDSTPANV. A coiled-coil region spans residues 218 to 245; the sequence is ANEIMDLLRGMDARLQHLEQKVDKVLAQ. Threonine 250 bears the Phosphothreonine mark. Position 257 is a phosphoserine (serine 257). Threonine 258 and threonine 282 each carry phosphothreonine. Residues serine 292 and serine 294 each carry the phosphoserine modification. The residue at position 298 (threonine 298) is a Phosphothreonine. Phosphoserine occurs at positions 301 and 374. The segment at 343–391 is interaction with the nucleoprotein; it reads AGRKVMITKMITDCVANPQMKQAFEQRLAKASTEDALNDIKRDIIRSAI. The x domain (XD) stretch occupies residues 348 to 391; it reads MITKMITDCVANPQMKQAFEQRLAKASTEDALNDIKRDIIRSAI. Threonine 375 is modified (phosphothreonine).

This sequence belongs to the rubulavirus/avulavirus P protein family. As to quaternary structure, homotetramer. Interacts (via multimerization domain) with polymerase L; this interaction forms the polymerase L-P complex. Interacts (via N-terminus) with N0 (via Ncore); this interaction allows P to chaperon N0 to avoid N polymerization before encapsidation. Interacts (via C-terminus) with N-RNA template; this interaction positions the polymerase on the template for both transcription and replication. Interacts with host RPS6KB1 kinase; this interaction may play a role in the viral replication and transcription.

It is found in the virion. In terms of biological role, essential cofactor of the RNA polymerase L that plays a central role in the transcription and replication by forming the polymerase complex with RNA polymerase L and recruiting L to the genomic N-RNA template for RNA synthesis. Also plays a central role in the encapsidation of nascent RNA chains by forming the encapsidation complex with the nucleocapsid protein N (N-P complex). Acts as a chaperone for newly synthesized free N protein, so-called N0, allowing encapsidation of nascent RNA chains during replication. The nucleoprotein protein N prevents excessive phosphorylation of P, which leads to down-regulation of viral transcription/ replication. Participates, together with N, in the formation of viral factories (viroplasms), which are large inclusions in the host cytoplasm where replication takes place. In Mumps orthorubulavirus (MuV), this protein is Phosphoprotein (V/P).